The primary structure comprises 236 residues: Urease accessory protein UreG (236 aa).

Residues 1–26 (MHDHSLHSGHDHGLGPGSFHDRGAPH) form a disordered region. Residue 42–49 (GPVGSGKT) coordinates GTP.

It belongs to the SIMIBI class G3E GTPase family. UreG subfamily. As to quaternary structure, homodimer. UreD, UreF and UreG form a complex that acts as a GTP-hydrolysis-dependent molecular chaperone, activating the urease apoprotein by helping to assemble the nickel containing metallocenter of UreC. The UreE protein probably delivers the nickel.

Its subcellular location is the cytoplasm. Facilitates the functional incorporation of the urease nickel metallocenter. This process requires GTP hydrolysis, probably effectuated by UreG. The chain is Urease accessory protein UreG from Anaeromyxobacter sp. (strain Fw109-5).